The chain runs to 770 residues: Arf-GAP with coiled-coil, ANK repeat and PH domain-containing protein 2 (770 aa).

The region spanning 1-226 is the BAR domain; that stretch reads MKMTVDFEEC…MKDLGAQLDR (226 aa). One can recognise a PH domain in the interval 266 to 361; sequence GIVMEGYLFK…WIKAVQTSIA (96 aa). The segment at 371-391 is disordered; the sequence is SEKLDKKSSPSTGSLDSGNES. Residues 379 to 388 show a composition bias toward polar residues; sequence SPSTGSLDSG. Serine 384 and serine 387 each carry phosphoserine. Residues 399 to 520 form the Arf-GAP domain; it reads ESALQRVQCI…KFVDKYSALL (122 aa). Residues 414–437 form a C4-type zinc finger; it reads CCDCGLADPRWASINLGITLCIEC. Position 521 is a phosphoserine (serine 521). Positions 542–572 are disordered; the sequence is ARASVHTPVKSNDSGIQQCSEDGRESLPSTV. A compositionally biased stretch (polar residues) spans 550–561; it reads VKSNDSGIQQCS. Phosphoserine is present on residues serine 573 and serine 576. 3 ANK repeats span residues 632-661, 665-694, and 698-727; these read NQAT…NVNQ, QGRG…NQHA, and EGKD…NEEM. The residue at position 734 (tyrosine 734) is a Phosphotyrosine. Serine 767 carries the post-translational modification Phosphoserine.

As to quaternary structure, interacts with RAB35 (GTP-bound form); the interaction is direct and probably recruits ACAP2 to membranes. Interacts with MICALL1; the interaction is indirect through RAB35.

It is found in the endosome membrane. Its subcellular location is the cell membrane. With respect to regulation, GAP activity stimulated by phosphatidylinositol 4,5-bisphosphate (PIP2) and phosphatidic acid. In terms of biological role, GTPase-activating protein (GAP) for ADP ribosylation factor 6 (ARF6). Doesn't show GAP activity for RAB35. The sequence is that of Arf-GAP with coiled-coil, ANK repeat and PH domain-containing protein 2 (Acap2) from Mus musculus (Mouse).